The sequence spans 188 residues: Ion-translocating oxidoreductase complex subunit B (188 aa).

Positions 1–26 are hydrophobic; the sequence is MNGVFLAIGALLPICLAGGALLGYAA. Residues 32–90 enclose the 4Fe-4S domain; sequence QGDPVAEQVNALLPQTQCGQCGYPGCKPYAEAIAAGDKINKCPPGGEATIRALADLLDL. Residues C49, C52, C57, C73, C113, C116, C119, C123, C143, C146, C149, and C153 each contribute to the [4Fe-4S] cluster site. 2 4Fe-4S ferredoxin-type domains span residues 104-133 and 134-163; these read RVAY…GAAR and LMHT…MREI.

It belongs to the 4Fe4S bacterial-type ferredoxin family. RnfB subfamily. In terms of assembly, the complex is composed of six subunits: RnfA, RnfB, RnfC, RnfD, RnfE and RnfG. [4Fe-4S] cluster is required as a cofactor.

It is found in the cell inner membrane. In terms of biological role, part of a membrane-bound complex that couples electron transfer with translocation of ions across the membrane. The protein is Ion-translocating oxidoreductase complex subunit B of Pseudomonas aeruginosa (strain LESB58).